The sequence spans 557 residues: Urocanate hydratase (557 aa).

NAD(+) is bound by residues 53–54 (GG), glutamine 131, 177–179 (GMG), glutamate 197, arginine 202, 243–244 (NA), 264–268 (QTSAH), 274–275 (YL), and tyrosine 323. Cysteine 411 is a catalytic residue. The segment at 445-464 (LDSGSVSSPNRETESMRDGS) is disordered. Basic and acidic residues predominate over residues 455–464 (RETESMRDGS). NAD(+) is bound at residue glycine 493.

It belongs to the urocanase family. It depends on NAD(+) as a cofactor.

The protein localises to the cytoplasm. The enzyme catalyses 4-imidazolone-5-propanoate = trans-urocanate + H2O. The protein operates within amino-acid degradation; L-histidine degradation into L-glutamate; N-formimidoyl-L-glutamate from L-histidine: step 2/3. In terms of biological role, catalyzes the conversion of urocanate to 4-imidazolone-5-propionate. The sequence is that of Urocanate hydratase from Pseudomonas putida (strain W619).